The following is a 61-amino-acid chain: UPF0181 protein MS1074 (61 aa).

This sequence belongs to the UPF0181 family.

This is UPF0181 protein MS1074 from Mannheimia succiniciproducens (strain KCTC 0769BP / MBEL55E).